Reading from the N-terminus, the 92-residue chain is UPF0473 protein BC_4380 (92 aa).

This sequence belongs to the UPF0473 family.

In Bacillus cereus (strain ATCC 14579 / DSM 31 / CCUG 7414 / JCM 2152 / NBRC 15305 / NCIMB 9373 / NCTC 2599 / NRRL B-3711), this protein is UPF0473 protein BC_4380.